The chain runs to 357 residues: uncharacterized protein (357 aa).

Transmembrane regions (helical) follow at residues 13–33, 44–64, 72–92, 148–168, 181–201, 203–223, 266–286, 293–313, and 327–347; these read PVTG…TYLV, IACT…CAVY, VSTF…TCFL, VLTY…FCFV, LPIS…SGFF, YLFI…LGIW, IALT…SALF, SISG…PFLI, and YWVL…VVLL.

It is found in the mitochondrion membrane. This is an uncharacterized protein from Schizosaccharomyces pombe (strain 972 / ATCC 24843) (Fission yeast).